The primary structure comprises 458 residues: Transcription factor verZ (458 aa).

The segment at residues cysteine 117 to cysteine 144 is a DNA-binding region (zn(2)-C6 fungal-type). Disordered stretches follow at residues glycine 153–methionine 256 and methionine 435–lysine 458. Polar residues-rich tracts occupy residues proline 167–alanine 186, phenylalanine 193–valine 207, and arginine 223–phenylalanine 235.

It localises to the nucleus. Functionally, transcription factor; part of the gene cluster that mediates the biosynthesis of 11'-deoxyverticillin A, one of the dimeric epipolythiodioxopiperazines (ETPs) from the verticillin family that act as mycotoxins. 11'-deoxyverticillin A is required for normal conidiation. Directly binds the consensus motif 5'-(T/C)(C/A)(G/T)GN3CC(G/T)(A/G)(G/C)-3' localized in the upstream regions of the verticillin biosynthetic genes. The sequence is that of Transcription factor verZ from Clonostachys rogersoniana.